We begin with the raw amino-acid sequence, 108 residues long: UPF0145 protein LJ_1287 (108 aa).

This sequence belongs to the UPF0145 family.

This chain is UPF0145 protein LJ_1287, found in Lactobacillus johnsonii (strain CNCM I-12250 / La1 / NCC 533).